Reading from the N-terminus, the 271-residue chain is Tryptophan synthase alpha chain (271 aa).

Residues Glu49 and Asp60 each act as proton acceptor in the active site.

Belongs to the TrpA family. Tetramer of two alpha and two beta chains.

It catalyses the reaction (1S,2R)-1-C-(indol-3-yl)glycerol 3-phosphate + L-serine = D-glyceraldehyde 3-phosphate + L-tryptophan + H2O. The protein operates within amino-acid biosynthesis; L-tryptophan biosynthesis; L-tryptophan from chorismate: step 5/5. Functionally, the alpha subunit is responsible for the aldol cleavage of indoleglycerol phosphate to indole and glyceraldehyde 3-phosphate. The chain is Tryptophan synthase alpha chain from Burkholderia lata (strain ATCC 17760 / DSM 23089 / LMG 22485 / NCIMB 9086 / R18194 / 383).